The chain runs to 141 residues: Nucleoside diphosphate kinase (141 aa).

ATP is bound by residues Lys-11, Phe-59, Arg-87, Thr-93, Arg-104, and Asn-114. Catalysis depends on His-117, which acts as the Pros-phosphohistidine intermediate.

Belongs to the NDK family. Homotetramer. Mg(2+) is required as a cofactor.

It localises to the cytoplasm. The enzyme catalyses a 2'-deoxyribonucleoside 5'-diphosphate + ATP = a 2'-deoxyribonucleoside 5'-triphosphate + ADP. The catalysed reaction is a ribonucleoside 5'-diphosphate + ATP = a ribonucleoside 5'-triphosphate + ADP. Functionally, major role in the synthesis of nucleoside triphosphates other than ATP. The ATP gamma phosphate is transferred to the NDP beta phosphate via a ping-pong mechanism, using a phosphorylated active-site intermediate. The protein is Nucleoside diphosphate kinase of Legionella pneumophila (strain Paris).